The sequence spans 230 residues: V-type proton ATPase subunit E1 (230 aa).

The residue at position 1 (Met1) is an N-acetylmethionine. Positions 8–67 (RQIQQMVRFIRQEAEEKANEISVSAEEEFNIEKLQLVEAEKKKIRQDYEKKEKQADVRKK) form a coiled coil. Ser178 is modified (phosphoserine).

The protein belongs to the V-ATPase E subunit family. As to quaternary structure, V-ATPase is a heteromultimeric enzyme composed of a peripheral catalytic V1 complex (components A to H) attached to an integral membrane V0 proton pore complex (components: a, c, c'', d and e).

The protein resides in the vacuole membrane. In terms of biological role, subunit of the peripheral V1 complex of vacuolar ATPase essential for assembly or catalytic function. V-ATPase is responsible for acidifying a variety of intracellular compartments in eukaryotic cells. Required for Golgi organization and vacuole function in embryogenesis. This is V-type proton ATPase subunit E1 (VHA-E1) from Arabidopsis thaliana (Mouse-ear cress).